Reading from the N-terminus, the 199-residue chain is Recombination protein RecR (199 aa).

The segment at 58–73 (CVRCGNITNADLCGIC) adopts a C4-type zinc-finger fold. Residues 81–176 (GELCVVEDVA…QVTSLAQGVP (96 aa)) enclose the Toprim domain.

It belongs to the RecR family.

Its function is as follows. May play a role in DNA repair. It seems to be involved in an RecBC-independent recombinational process of DNA repair. It may act with RecF and RecO. The polypeptide is Recombination protein RecR (Cereibacter sphaeroides (strain ATCC 17029 / ATH 2.4.9) (Rhodobacter sphaeroides)).